The following is a 187-amino-acid chain: Ion-translocating oxidoreductase complex subunit B (187 aa).

A hydrophobic region spans residues 1-26 (MTHILFAVLVLALLALAFGIILGFAA). In terms of domain architecture, 4Fe-4S spans 32–90 (EADPIVDQLDALLPQTQCGQCGYPGCKPYAEALANGDQINKCVPGGDATMRKIADLMGV). C49, C52, C57, C73, C115, C118, C121, C125, C145, C148, C151, and C155 together coordinate [4Fe-4S] cluster. 4Fe-4S ferredoxin-type domains follow at residues 106-135 (KVAF…GATK) and 136-165 (AMHT…MIPV).

It belongs to the 4Fe4S bacterial-type ferredoxin family. RnfB subfamily. The complex is composed of six subunits: RnfA, RnfB, RnfC, RnfD, RnfE and RnfG. It depends on [4Fe-4S] cluster as a cofactor.

It is found in the cell inner membrane. In terms of biological role, part of a membrane-bound complex that couples electron transfer with translocation of ions across the membrane. In Aeromonas hydrophila subsp. hydrophila (strain ATCC 7966 / DSM 30187 / BCRC 13018 / CCUG 14551 / JCM 1027 / KCTC 2358 / NCIMB 9240 / NCTC 8049), this protein is Ion-translocating oxidoreductase complex subunit B.